The primary structure comprises 467 residues: Gamma-aminobutyric acid receptor subunit gamma-2 (467 aa).

The N-terminal stretch at 1–39 is a signal peptide; the sequence is MSSPNIWSTGSSVYSTPVFSQKMTVWILLLLSLYPGFTS. Topologically, residues 40-275 are extracellular; sequence QKSDDDYEDY…FDLSRRMGYF (236 aa). N-linked (GlcNAc...) asparagine glycosylation is found at Asn-52 and Asn-129. Cysteines 190 and 204 form a disulfide. Asn-247 carries N-linked (GlcNAc...) asparagine glycosylation. Residues 276 to 296 form a helical membrane-spanning segment; that stretch reads TIQTYIPCTLIVVLSWVSFWI. Residues 297–302 lie on the Cytoplasmic side of the membrane; that stretch reads NKDAVP. A helical membrane pass occupies residues 303–322; that stretch reads ARTSLGITTVLTMTTLSTIA. Residues 323 to 334 are Extracellular-facing; that stretch reads RKSLPKVSYVTA. The helical transmembrane segment at 335–359 threads the bilayer; the sequence is MDLFVSVCFIFVFSALVEYGTLHYF. Residues 360-443 are Cytoplasmic-facing; sequence VSNRKPSKDK…IHIRIAKMDS (84 aa). Residues 425–442 are interaction with GABARAP; sequence RTGAWRHGRIHIRIAKMD. A helical membrane pass occupies residues 444–464; the sequence is YARIFFPTAFCLFNLVYWVSY. Residues 465–467 lie on the Extracellular side of the membrane; sequence LYL.

It belongs to the ligand-gated ion channel (TC 1.A.9) family. Gamma-aminobutyric acid receptor (TC 1.A.9.5) subfamily. GABRG2 sub-subfamily. In terms of assembly, heteropentamer, formed by a combination of alpha (GABRA1-6), beta (GABRB1-3), gamma (GABRG1-3), delta (GABRD), epsilon (GABRE), rho (GABRR1-3), pi (GABRP) and theta (GABRQ) chains, each subunit exhibiting distinct physiological and pharmacological properties. Interacts with GABARAP. Interacts with KIF21B. Identified in a complex of 720 kDa composed of LHFPL4, NLGN2, GABRA1, GABRB2, GABRG2 and GABRB3. Interacts with LHFPL4. Interacts with SHISA7; interaction leads to the regulation of GABA(A) receptor trafficking, channel deactivation kinetics and pharmacology. In terms of processing, palmitoylated by ZDHHC3/GODZ; required for the accumulation of GABA(A) receptors at the postsynaptic membrane of inhibitory GABAergic synapses. Post-translationally, glycosylated.

It localises to the postsynaptic cell membrane. It is found in the cell membrane. The protein localises to the cell projection. The protein resides in the dendrite. Its subcellular location is the cytoplasmic vesicle membrane. It carries out the reaction chloride(in) = chloride(out). With respect to regulation, allosterically activated by benzodiazepines. Activated by pentobarbital. Inhibited by the antagonist bicuculline. Inhibited by zinc ions. Potentiated by histamine. Gamma subunit of the heteropentameric ligand-gated chloride channel gated by gamma-aminobutyric acid (GABA), a major inhibitory neurotransmitter in the brain. GABA-gated chloride channels, also named GABA(A) receptors (GABAAR), consist of five subunits arranged around a central pore and contain GABA active binding site(s) located at the alpha and beta subunit interface(s). When activated by GABA, GABAARs selectively allow the flow of chloride anions across the cell membrane down their electrochemical gradient. Gamma-2/GABRG2-containing GABAARs are found at both synaptic and extrasynaptic sites. Chloride influx into the postsynaptic neuron following GABAAR opening decreases the neuron ability to generate a new action potential, thereby reducing nerve transmission. GABAARs containing alpha-1 and beta-2 or -3 subunits exhibit synaptogenic activity; the gamma-2 subunit being necessary but not sufficient to induce rapid synaptic contacts formation. Extrasynaptic gamma-2-containing receptors contribute to the tonic GABAergic inhibition. GABAARs function also as histamine receptor where histamine binds at the interface of two neighboring beta subunits and potentiates GABA response in a gamma-2 subunit-controlled manner. In Pongo abelii (Sumatran orangutan), this protein is Gamma-aminobutyric acid receptor subunit gamma-2 (GABRG2).